Here is a 514-residue protein sequence, read N- to C-terminus: Efflux pump aflT (514 aa).

10 helical membrane-spanning segments follow: residues 13 to 33 (ISGM…FCVA), 61 to 81 (SAYL…YALF), 85 to 105 (WVFL…GVAP), 116 to 136 (IAGV…AHIV), 146 to 166 (GLLG…GGAF), 174 to 194 (WCFY…LFLL), 218 to 238 (GTIV…WGGV), 247 to 267 (IIAL…IQVL), 289 to 309 (VFVF…PIWF), and 321 to 341 (GIDS…SGAV). N-linked (GlcNAc...) asparagine glycosylation occurs at N343. 4 consecutive transmembrane segments (helical) span residues 351–371 (WFIV…LFTV), 378–398 (WIGF…QGAV), 411–431 (IGTA…TSVA), and 485–505 (LDVF…AVGI).

The protein belongs to the major facilitator superfamily. TCR/Tet family.

It is found in the cell membrane. In terms of biological role, efflux pump; part of the gene cluster that mediates the biosynthesis of aflatoxins. This Aspergillus parasiticus (strain ATCC 56775 / NRRL 5862 / SRRC 143 / SU-1) protein is Efflux pump aflT.